A 187-amino-acid chain; its full sequence is Elongation factor P (187 aa).

It belongs to the elongation factor P family.

The protein resides in the cytoplasm. It participates in protein biosynthesis; polypeptide chain elongation. Functionally, involved in peptide bond synthesis. Stimulates efficient translation and peptide-bond synthesis on native or reconstituted 70S ribosomes in vitro. Probably functions indirectly by altering the affinity of the ribosome for aminoacyl-tRNA, thus increasing their reactivity as acceptors for peptidyl transferase. In Helicobacter pylori (strain P12), this protein is Elongation factor P.